The sequence spans 227 residues: MAFSASLFRTKTVHTEDAFCPRSAIQAEQPPNIIDCIPVAGYEAALITNALFLLVLFVFNPLTCKGNWIKAILFYSLLLYNMILAIFLVVDTQHFVSALLLAYVVTFLVLWTADRIRLSCAVGSVLPFVDMRSSYIRVDNGNSSVVVPMNHTKHWFIRNFEQSCHCENCFYIHSSSYVECTFISRLKKSILVSVCDFSLGGNVSTVFVPSSDKTVPLHIIAPSKLYV.

One can recognise a CoV 3a-like viroporin TM domain in the interval 27 to 130 (AEQPPNIIDC…AVGSVLPFVD (104 aa)). 3 helical membrane passes run 39–59 (VAGY…LFVF), 71–91 (AILF…LVVD), and 93–113 (QHFV…LWTA). The CoV 3a-like viroporin CD domain occupies 134 to 191 (SYIRVDNGNSSVVVPMNHTKHWFIRNFEQSCHCENCFYIHSSSYVECTFISRLKKSIL).

It is found in the host membrane. In Bat coronavirus HKU4 (BtCoV), this protein is Non-structural protein 3d.